The primary structure comprises 376 residues: Chaperone protein DnaJ (376 aa).

The region spanning 5-70 (DYYEVLGVKK…QKRAAYDQYG (66 aa)) is the J domain. The CR-type zinc-finger motif lies at 131–209 (GVTKEIRIPT…CHGHGRVEKS (79 aa)). Cys-144, Cys-147, Cys-161, Cys-164, Cys-183, Cys-186, Cys-197, and Cys-200 together coordinate Zn(2+). 4 CXXCXGXG motif repeats span residues 144 to 151 (CDVCHGSG), 161 to 168 (CSTCRGAG), 183 to 190 (CPTCHGSG), and 197 to 204 (CNKCHGHG).

It belongs to the DnaJ family. As to quaternary structure, homodimer. Requires Zn(2+) as cofactor.

Its subcellular location is the cytoplasm. In terms of biological role, participates actively in the response to hyperosmotic and heat shock by preventing the aggregation of stress-denatured proteins and by disaggregating proteins, also in an autonomous, DnaK-independent fashion. Unfolded proteins bind initially to DnaJ; upon interaction with the DnaJ-bound protein, DnaK hydrolyzes its bound ATP, resulting in the formation of a stable complex. GrpE releases ADP from DnaK; ATP binding to DnaK triggers the release of the substrate protein, thus completing the reaction cycle. Several rounds of ATP-dependent interactions between DnaJ, DnaK and GrpE are required for fully efficient folding. Also involved, together with DnaK and GrpE, in the DNA replication of plasmids through activation of initiation proteins. This chain is Chaperone protein DnaJ, found in Yersinia enterocolitica serotype O:8 / biotype 1B (strain NCTC 13174 / 8081).